The chain runs to 427 residues: Light-independent protochlorophyllide reductase subunit N (427 aa).

Positions 28, 53, and 114 each coordinate [4Fe-4S] cluster.

Belongs to the BchN/ChlN family. Protochlorophyllide reductase is composed of three subunits; BchL, BchN and BchB. Forms a heterotetramer of two BchB and two BchN subunits. Requires [4Fe-4S] cluster as cofactor.

It carries out the reaction chlorophyllide a + oxidized 2[4Fe-4S]-[ferredoxin] + 2 ADP + 2 phosphate = protochlorophyllide a + reduced 2[4Fe-4S]-[ferredoxin] + 2 ATP + 2 H2O. It participates in porphyrin-containing compound metabolism; bacteriochlorophyll biosynthesis (light-independent). Its function is as follows. Component of the dark-operative protochlorophyllide reductase (DPOR) that uses Mg-ATP and reduced ferredoxin to reduce ring D of protochlorophyllide (Pchlide) to form chlorophyllide a (Chlide). This reaction is light-independent. The NB-protein (BchN-BchB) is the catalytic component of the complex. The sequence is that of Light-independent protochlorophyllide reductase subunit N from Jannaschia sp. (strain CCS1).